The following is a 302-amino-acid chain: HTH-type transcriptional regulator ArgP (302 aa).

Residues 4 to 60 form the HTH lysR-type domain; sequence PDYRTLQALDAVIRERGFERAAQKLCITQSAVSQRIKQLENLFGQPLLVRTVPPRPT. A DNA-binding region (H-T-H motif) is located at residues 21 to 40; it reads FERAAQKLCITQSAVSQRIK.

It belongs to the LysR transcriptional regulatory family. As to quaternary structure, homodimer.

Its function is as follows. Controls the transcription of genes involved in arginine and lysine metabolism. The sequence is that of HTH-type transcriptional regulator ArgP from Yersinia pseudotuberculosis serotype O:1b (strain IP 31758).